The sequence spans 139 residues: Endoribonuclease YbeY (139 aa).

Histidine 105, histidine 109, and aspartate 115 together coordinate Zn(2+).

Belongs to the endoribonuclease YbeY family. It depends on Zn(2+) as a cofactor.

Its subcellular location is the cytoplasm. In terms of biological role, single strand-specific metallo-endoribonuclease involved in late-stage 70S ribosome quality control and in maturation of the 3' terminus of the 16S rRNA. The sequence is that of Endoribonuclease YbeY from Flavobacterium johnsoniae (strain ATCC 17061 / DSM 2064 / JCM 8514 / BCRC 14874 / CCUG 350202 / NBRC 14942 / NCIMB 11054 / UW101) (Cytophaga johnsonae).